We begin with the raw amino-acid sequence, 180 residues long: Ribosome-recycling factor (180 aa).

Residues S135–Q156 are disordered.

It belongs to the RRF family.

The protein resides in the cytoplasm. Its function is as follows. Responsible for the release of ribosomes from messenger RNA at the termination of protein biosynthesis. May increase the efficiency of translation by recycling ribosomes from one round of translation to another. This chain is Ribosome-recycling factor, found in Oenococcus oeni (strain ATCC BAA-331 / PSU-1).